The sequence spans 107 residues: uncharacterized protein (107 aa).

Topologically, residues Met1–Val4 are cytoplasmic. A helical membrane pass occupies residues Ile5–Ile25. Residues Lys26–Lys107 are Extracellular-facing.

It is found in the host membrane. This is an uncharacterized protein from Acidianus sp. F28 (AFV-2).